Consider the following 68-residue polypeptide: Putative membrane protein insertion efficiency factor (68 aa).

This sequence belongs to the UPF0161 family.

The protein resides in the cell membrane. In terms of biological role, could be involved in insertion of integral membrane proteins into the membrane. This Herpetosiphon aurantiacus (strain ATCC 23779 / DSM 785 / 114-95) protein is Putative membrane protein insertion efficiency factor.